The primary structure comprises 218 residues: Ribose-5-phosphate isomerase A (218 aa).

Substrate contacts are provided by residues 28–31 (TGST), 81–84 (DGAD), and 94–97 (KGGG). Glutamate 103 functions as the Proton acceptor in the catalytic mechanism. Lysine 121 provides a ligand contact to substrate.

This sequence belongs to the ribose 5-phosphate isomerase family. Homodimer.

It carries out the reaction aldehydo-D-ribose 5-phosphate = D-ribulose 5-phosphate. It functions in the pathway carbohydrate degradation; pentose phosphate pathway; D-ribose 5-phosphate from D-ribulose 5-phosphate (non-oxidative stage): step 1/1. Its function is as follows. Catalyzes the reversible conversion of ribose-5-phosphate to ribulose 5-phosphate. This chain is Ribose-5-phosphate isomerase A, found in Alcanivorax borkumensis (strain ATCC 700651 / DSM 11573 / NCIMB 13689 / SK2).